The chain runs to 179 residues: Protein GrpE (179 aa).

Belongs to the GrpE family. In terms of assembly, homodimer.

It is found in the cytoplasm. Its function is as follows. Participates actively in the response to hyperosmotic and heat shock by preventing the aggregation of stress-denatured proteins, in association with DnaK and GrpE. It is the nucleotide exchange factor for DnaK and may function as a thermosensor. Unfolded proteins bind initially to DnaJ; upon interaction with the DnaJ-bound protein, DnaK hydrolyzes its bound ATP, resulting in the formation of a stable complex. GrpE releases ADP from DnaK; ATP binding to DnaK triggers the release of the substrate protein, thus completing the reaction cycle. Several rounds of ATP-dependent interactions between DnaJ, DnaK and GrpE are required for fully efficient folding. This chain is Protein GrpE, found in Rickettsia felis (strain ATCC VR-1525 / URRWXCal2) (Rickettsia azadi).